The following is a 174-amino-acid chain: Large ribosomal subunit protein uL10 (174 aa).

Belongs to the universal ribosomal protein uL10 family. Part of the ribosomal stalk of the 50S ribosomal subunit. The N-terminus interacts with L11 and the large rRNA to form the base of the stalk. The C-terminus forms an elongated spine to which L12 dimers bind in a sequential fashion forming a multimeric L10(L12)X complex.

In terms of biological role, forms part of the ribosomal stalk, playing a central role in the interaction of the ribosome with GTP-bound translation factors. The polypeptide is Large ribosomal subunit protein uL10 (Bordetella petrii (strain ATCC BAA-461 / DSM 12804 / CCUG 43448)).